Reading from the N-terminus, the 156-residue chain is 6,7-dimethyl-8-ribityllumazine synthase (156 aa).

Residues Phe-22, 57–59, and 81–83 each bind 5-amino-6-(D-ribitylamino)uracil; these read AYE and TVI. 86-87 serves as a coordination point for (2S)-2-hydroxy-3-oxobutyl phosphate; the sequence is GT. His-89 (proton donor) is an active-site residue. Phe-114 serves as a coordination point for 5-amino-6-(D-ribitylamino)uracil. Arg-128 is a binding site for (2S)-2-hydroxy-3-oxobutyl phosphate.

Belongs to the DMRL synthase family. In terms of assembly, forms an icosahedral capsid composed of 60 subunits, arranged as a dodecamer of pentamers.

It catalyses the reaction (2S)-2-hydroxy-3-oxobutyl phosphate + 5-amino-6-(D-ribitylamino)uracil = 6,7-dimethyl-8-(1-D-ribityl)lumazine + phosphate + 2 H2O + H(+). It participates in cofactor biosynthesis; riboflavin biosynthesis; riboflavin from 2-hydroxy-3-oxobutyl phosphate and 5-amino-6-(D-ribitylamino)uracil: step 1/2. In terms of biological role, catalyzes the formation of 6,7-dimethyl-8-ribityllumazine by condensation of 5-amino-6-(D-ribitylamino)uracil with 3,4-dihydroxy-2-butanone 4-phosphate. This is the penultimate step in the biosynthesis of riboflavin. The polypeptide is 6,7-dimethyl-8-ribityllumazine synthase (Cronobacter sakazakii (strain ATCC BAA-894) (Enterobacter sakazakii)).